A 331-amino-acid chain; its full sequence is Tetraacyldisaccharide 4'-kinase (331 aa).

55–62 (SVGGNGKT) provides a ligand contact to ATP.

The protein belongs to the LpxK family.

It catalyses the reaction a lipid A disaccharide + ATP = a lipid IVA + ADP + H(+). The protein operates within glycolipid biosynthesis; lipid IV(A) biosynthesis; lipid IV(A) from (3R)-3-hydroxytetradecanoyl-[acyl-carrier-protein] and UDP-N-acetyl-alpha-D-glucosamine: step 6/6. In terms of biological role, transfers the gamma-phosphate of ATP to the 4'-position of a tetraacyldisaccharide 1-phosphate intermediate (termed DS-1-P) to form tetraacyldisaccharide 1,4'-bis-phosphate (lipid IVA). In Aeromonas salmonicida (strain A449), this protein is Tetraacyldisaccharide 4'-kinase.